A 460-amino-acid polypeptide reads, in one-letter code: NADH-ubiquinone oxidoreductase chain 4 (460 aa).

13 helical membrane-spanning segments follow: residues 20–42 (AKWL…LSWL), 61–81 (PLST…VLAS), 94–113 (RTYI…AFGA), 117–139 (IMFY…RWGN), 148–168 (TYFL…LLLL), 195–215 (LWWA…GVHL), 225–245 (PIAG…YGMM), 258–278 (LAYP…SICL), 285–304 (SLIA…GILI), 308–330 (WGFT…LFCL), 351–371 (MILP…LALP), 394–414 (LLLT…LFLM), and 436–456 (LLIT…ELMW).

It belongs to the complex I subunit 4 family.

It localises to the mitochondrion membrane. It carries out the reaction a ubiquinone + NADH + 5 H(+)(in) = a ubiquinol + NAD(+) + 4 H(+)(out). Functionally, core subunit of the mitochondrial membrane respiratory chain NADH dehydrogenase (Complex I) that is believed to belong to the minimal assembly required for catalysis. Complex I functions in the transfer of electrons from NADH to the respiratory chain. The immediate electron acceptor for the enzyme is believed to be ubiquinone. The protein is NADH-ubiquinone oxidoreductase chain 4 (MT-ND4) of Salmo salar (Atlantic salmon).